The chain runs to 537 residues: Carbamoyl phosphate synthase large chain, C-terminal section (537 aa).

Residues 1-395 (MSKKVVILGS…AYYKAQLSAG (395 aa)) are carbamoyl phosphate synthetic domain. The region spanning 122 to 313 (RELIIELGLK…LAKIATKVAI (192 aa)) is the ATP-grasp domain. ATP-binding residues include R158, K197, L199, E204, G229, V230, H231, S232, Q272, and E284. Mg(2+)-binding residues include Q272, E284, and N286. Mn(2+)-binding residues include Q272, E284, and N286. In terms of domain architecture, MGS-like spans 396 to 537 (YRLPEKGNLF…VHSLQEIYNI (142 aa)). The segment at 396 to 537 (YRLPEKGNLF…VHSLQEIYNI (142 aa)) is allosteric domain.

It belongs to the CarB family. In terms of assembly, composed of two chains; the small (or glutamine) chain promotes the hydrolysis of glutamine to ammonia, which is used by the large (or ammonia) chain to synthesize carbamoyl phosphate. Tetramer of heterodimers (alpha,beta)4. Requires Mg(2+) as cofactor. It depends on Mn(2+) as a cofactor.

The enzyme catalyses hydrogencarbonate + L-glutamine + 2 ATP + H2O = carbamoyl phosphate + L-glutamate + 2 ADP + phosphate + 2 H(+). It catalyses the reaction hydrogencarbonate + NH4(+) + 2 ATP = carbamoyl phosphate + 2 ADP + phosphate + 2 H(+). Its pathway is amino-acid biosynthesis; L-arginine biosynthesis; carbamoyl phosphate from bicarbonate: step 1/1. It participates in pyrimidine metabolism; UMP biosynthesis via de novo pathway; (S)-dihydroorotate from bicarbonate: step 1/3. Large subunit of the glutamine-dependent carbamoyl phosphate synthetase (CPSase). CPSase catalyzes the formation of carbamoyl phosphate from the ammonia moiety of glutamine, carbonate, and phosphate donated by ATP, constituting the first step of 2 biosynthetic pathways, one leading to arginine and/or urea and the other to pyrimidine nucleotides. The large subunit (synthetase) binds the substrates ammonia (free or transferred from glutamine from the small subunit), hydrogencarbonate and ATP and carries out an ATP-coupled ligase reaction, activating hydrogencarbonate by forming carboxy phosphate which reacts with ammonia to form carbamoyl phosphate. The polypeptide is Carbamoyl phosphate synthase large chain, C-terminal section (carB2) (Aquifex aeolicus (strain VF5)).